We begin with the raw amino-acid sequence, 469 residues long: MTTKTRFAPSPTGFLHVGGARTALYSWLYARANQGEFVLRVEDTDIERSTPEACEAILEGMQWLGLNWDEGPYYQTKRFDRYNEIIAQMLEQGTAYKCYCSRERIETMRDEQAAKGEQQKYDGCCRDKAPRDTDEPFVIRFKNPTEGSVVFDDHVRGRIEISNDLLDDLIIARTEGTPTYNFCVVVDDWDMGITCVVRGEDHINNTPRQINILKALGAPIPEYAHVAMILGDDGAKLSKRHGAVGVMQYRDDGYLPEALLNYLVRLGWSHGDQEVFSIDEMKQLFKLDDINKAASAFNTEKLNWLNQHYIKELDPEYVAKHLEWHMADQKIDTSNGPALSAVVTALSERAKTLKELAASSRYFYEDFAEFDATAAKKHLRGVAMEPLELVQKKLAELSEWTLEGIHQAIEDTATELEVGMGKVGMPLRVAVTGAGMSPAVDLTLFLVGKARCEQRISKAIEFVANRINS.

A 'HIGH' region motif is present at residues 9-19; sequence PSPTGFLHVGG. Positions 98, 100, 125, and 127 each coordinate Zn(2+). Positions 236–240 match the 'KMSKS' region motif; it reads KLSKR. ATP is bound at residue Lys239.

The protein belongs to the class-I aminoacyl-tRNA synthetase family. Glutamate--tRNA ligase type 1 subfamily. As to quaternary structure, monomer. Zn(2+) is required as a cofactor.

The protein localises to the cytoplasm. The catalysed reaction is tRNA(Glu) + L-glutamate + ATP = L-glutamyl-tRNA(Glu) + AMP + diphosphate. Its function is as follows. Catalyzes the attachment of glutamate to tRNA(Glu) in a two-step reaction: glutamate is first activated by ATP to form Glu-AMP and then transferred to the acceptor end of tRNA(Glu). The protein is Glutamate--tRNA ligase of Shewanella sediminis (strain HAW-EB3).